The primary structure comprises 395 residues: MAETFLFTSESVNEGHPDKLCDQISDAVLDACLAQDPDSKVACETCTKTNMVMVFGEITTKADVDYEKIVRDTCRNIGFTSADVGLDADNCKVLVNIEQQSPDIAQGVHGHFSKRPEEIGAGDQGHMFGYATDETPELMPLSHVLATKLGARLTEVRKNGTCAWLRPDGKTQVTVEYYNENGAMVPVRVHTVLISTQHDETVTNDEIAADLKEHVIKPVIPEKYLDEKTIFHLNPSGRFVIGGPHGESGLTGRKIIIDTYGGWGAHGGGAFSGKDPTKVDRSGAYIVRQAAKSIVASGLARRCIVQVSYAIGVPEPLSVFVDTYGTGKIPDKEILQIVKERFDFRPGMISINLDLKRGGNSRFLKTAAYGHFGRDDPDFTWEVVKPLKWDNKVQA.

Glu-10 is a Mg(2+) binding site. Residue His-16 coordinates ATP. Glu-44 contacts K(+). Residues Glu-57 and Gln-100 each contribute to the L-methionine site. ATP-binding positions include 168 to 170 (DGK), 236 to 239 (SGRF), 253 to 254 (RK), Ala-270, Lys-274, and Lys-278. Lys-278 serves as a coordination point for L-methionine.

It belongs to the AdoMet synthase family. As to quaternary structure, homotetramer. Mn(2+) serves as cofactor. Requires Mg(2+) as cofactor. The cofactor is Co(2+). K(+) is required as a cofactor.

It localises to the cytoplasm. It catalyses the reaction L-methionine + ATP + H2O = S-adenosyl-L-methionine + phosphate + diphosphate. It participates in amino-acid biosynthesis; S-adenosyl-L-methionine biosynthesis; S-adenosyl-L-methionine from L-methionine: step 1/1. In terms of biological role, catalyzes the formation of S-adenosylmethionine from methionine and ATP. The reaction comprises two steps that are both catalyzed by the same enzyme: formation of S-adenosylmethionine (AdoMet) and triphosphate, and subsequent hydrolysis of the triphosphate. The protein is S-adenosylmethionine synthase (METK) of Populus deltoides (Eastern poplar).